We begin with the raw amino-acid sequence, 577 residues long: Maltase A1 (577 aa).

The N-terminal stretch at 1 to 19 (MRPQSAACLLLAIVGFVGA) is a signal peptide. N-linked (GlcNAc...) asparagine glycosylation is found at Asn119 and Asn151. The active-site Nucleophile is the Asp221. An N-linked (GlcNAc...) asparagine glycan is attached at Asn244. Glu297 acts as the Proton donor in catalysis. N-linked (GlcNAc...) asparagine glycans are attached at residues Asn315 and Asn331.

This sequence belongs to the glycosyl hydrolase 13 family.

It catalyses the reaction Hydrolysis of terminal, non-reducing (1-&gt;4)-linked alpha-D-glucose residues with release of alpha-D-glucose.. The sequence is that of Maltase A1 (Mal-A1) from Drosophila melanogaster (Fruit fly).